Consider the following 236-residue polypeptide: MPPKKTETKAADASAAAAPAPAAAPTSAPKTKSPSTHASYLDMITDAIVALKDRAGSSRQALKKYVRANNTLGNVTDNMFDSLFNKALKNGVDKGVFEQPKGPSGGTKLAKKVAKPAPKKAAPKKETKEKKPAAAKKEGAAKKETKEKKAPAAKKAAAPKKAAAPKKEVKEKKAAAPKKKAAAPAVADKETVLTKTKSGRVAKSTAKPAAAKKAAAPKKAAASKKAEKAEPAAEKA.

The span at 1–10 shows a compositional bias: basic and acidic residues; sequence MPPKKTETKA. 2 disordered regions span residues 1-36 and 94-236; these read MPPKKTETKAADASAAAAPAPAAAPTSAPKTKSPST and KGVF…AEKA. The span at 11–36 shows a compositional bias: low complexity; sequence ADASAAAAPAPAAAPTSAPKTKSPST. An H15 domain is found at 36-111; it reads THASYLDMIT…GPSGGTKLAK (76 aa). Over residues 109-122 the composition is skewed to basic residues; sequence LAKKVAKPAPKKAA. Over residues 123 to 150 the composition is skewed to basic and acidic residues; it reads PKKETKEKKPAAAKKEGAAKKETKEKKA. A compositionally biased stretch (low complexity) spans 153–162; sequence AKKAAAPKKA. Residues 165–174 show a composition bias toward basic and acidic residues; that stretch reads PKKEVKEKKA. Positions 202–220 are enriched in low complexity; it reads AKSTAKPAAAKKAAAPKKA. Residues 224–236 are compositionally biased toward basic and acidic residues; the sequence is KKAEKAEPAAEKA.

Belongs to the histone H1/H5 family.

Its subcellular location is the nucleus. The protein localises to the chromosome. Functionally, could act as an H1-type linker histone. In Neurospora crassa (strain ATCC 24698 / 74-OR23-1A / CBS 708.71 / DSM 1257 / FGSC 987), this protein is Histone H1 (hH1).